The chain runs to 898 residues: MFKEIFTRLIRHLPSRLVHRDPLPGAQQTVNTVVPPSLSAHCLKMAVMPEEELWKTFDTHPEGLNQAEVESAREQHGENKLPAQQPSPWWVHLWVCYRNPFNILLTILGAISYATEDLFAAGVIALMVAISTLLNFIQEARSTKAADALKAMVSNTATVLRVINDKGENGWLEIPIDQLVPGDIIKLAAGDMIPADLRILQARDLFVAQASLTGESLPVEKAATTRQPEHSNPLECDTLCFMGTTVVSGTAQAMVIATGANTWFGQLAGRVSEQESEPNAFQQGISRVSMLLIRFMLVMAPVVLLINGYTKGDWWEAALFALSVAVGLTPEMLPMIVTSTLARGAVKLSKQKVIVKHLDAIQNFGAMDILCTDKTGTLTQDKIVLENHTDISGKTSERVLHSAWLNSHYQTGLKNLLDTAVLEGTDEESARSLASRWQKIDEIPFDFERRRMSVVVAENTEHHQLVCKGALQEILNVCSQVRHNGEIVPLDDIMLRKIKRVTDTLNRQGLRVVAVATKYLPAREGDYQRADESDLILEGYIAFLDPPKETTAPALKALKASGITVKILTGDSELVAAKVCHEVGLDAGEVVIGSDIETLSDDELANLAQRTTLFARLTPMHKERIVTLLKREGHVVGFMGDGINDAPALRAADIGISVDGAVDIAREAADIILLEKSLMVLEEGVIEGRRTFANMLKYIKMTASSNFGNVFSVLVASAFLPFLPMLPLHLLIQNLLYDVSQVAIPFDNVDDEQIQKPQRWNPADLGRFMIFFGPISSIFDILTFCLMWWVFHANTPETQTLFQSGWFVVGLLSQTLIVHMIRTRRVPFIQSCASWPLMIMTVIVMIVGIALPFSPLASYLQLQALPLSYFPWLVAILAGYMTLTQLVKGFYSRRYGWQ.

The Cytoplasmic segment spans residues 1–94; the sequence is MFKEIFTRLI…QPSPWWVHLW (94 aa). Residues 95–115 traverse the membrane as a helical segment; that stretch reads VCYRNPFNILLTILGAISYAT. Glu116 is a topological domain (extracellular). A helical transmembrane segment spans residues 117–137; that stretch reads DLFAAGVIALMVAISTLLNFI. Topologically, residues 138-287 are cytoplasmic; that stretch reads QEARSTKAAD…PNAFQQGISR (150 aa). The helical transmembrane segment at 288 to 308 threads the bilayer; sequence VSMLLIRFMLVMAPVVLLING. Residues 309 to 317 lie on the Extracellular side of the membrane; the sequence is YTKGDWWEA. The chain crosses the membrane as a helical span at residues 318 to 335; it reads ALFALSVAVGLTPEMLPM. Position 331 (Glu331) interacts with Mg(2+). At 336–695 the chain is on the cytoplasmic side; that stretch reads IVTSTLARGA…IEGRRTFANM (360 aa). Asp373 (4-aspartylphosphate intermediate) is an active-site residue. Residues Asp641, Asp645, and Asn709 each contribute to the Mg(2+) site. The chain crosses the membrane as a helical span at residues 696-715; the sequence is LKYIKMTASSNFGNVFSVLV. Over 716–724 the chain is Extracellular; the sequence is ASAFLPFLP. The chain crosses the membrane as a helical span at residues 725 to 744; that stretch reads MLPLHLLIQNLLYDVSQVAI. Mg(2+) is bound by residues Asn734 and Asp738. The Cytoplasmic portion of the chain corresponds to 745-766; it reads PFDNVDDEQIQKPQRWNPADLG. A helical transmembrane segment spans residues 767–790; sequence RFMIFFGPISSIFDILTFCLMWWV. At 791 to 799 the chain is on the extracellular side; the sequence is FHANTPETQ. Residues 800–818 form a helical membrane-spanning segment; the sequence is TLFQSGWFVVGLLSQTLIV. Topologically, residues 819–831 are cytoplasmic; it reads HMIRTRRVPFIQS. The helical transmembrane segment at 832–851 threads the bilayer; it reads CASWPLMIMTVIVMIVGIAL. The Extracellular segment spans residues 852-866; that stretch reads PFSPLASYLQLQALP. A helical transmembrane segment spans residues 867–886; that stretch reads LSYFPWLVAILAGYMTLTQL. The Cytoplasmic segment spans residues 887–898; that stretch reads VKGFYSRRYGWQ.

This sequence belongs to the cation transport ATPase (P-type) (TC 3.A.3) family. Type IIIB subfamily.

It localises to the cell inner membrane. The enzyme catalyses Mg(2+)(out) + ATP + H2O = Mg(2+)(in) + ADP + phosphate + H(+). Its function is as follows. Mediates magnesium influx to the cytosol. The sequence is that of Magnesium-transporting ATPase, P-type 1 (mgtA) from Escherichia coli O157:H7.